The following is a 334-amino-acid chain: BRISC and BRCA1-A complex member 1 (334 aa).

M1 carries the post-translational modification N-acetylmethionine. Residues 1-79 (MEVAEANSPT…VPGAVPKPWQ (79 aa)) form a disordered region. Position 8 is a phosphoserine (S8). Positions 10–25 (TEEEEEEEEEEGEEPI) are enriched in acidic residues. S34 and S54 each carry phosphoserine. The span at 59–68 (EAATADDGAA) shows a compositional bias: low complexity. A VWFA-like region spans residues 100–303 (VIICLDLSEE…LELHNCVAKL (204 aa)).

Belongs to the BABAM1 family. As to quaternary structure, component of the ARISC complex, at least composed of UIMC1/RAP80, ABRAXAS1, BRCC3/BRCC36, BABAM2 and BABAM1/NBA1. Component of the BRCA1-A complex, at least composed of BRCA1, BARD1, UIMC1/RAP80, ABRAXAS1, BRCC3/BRCC36, BABAM2 and BABAM1/NBA1. In the BRCA1-A complex, interacts directly with ABRAXAS1 and BABAM2. Component of the BRISC complex, at least composed of ABRAXAS2, BRCC3/BRCC36, BABAM2 and BABAM1/NBA1. Identified in a complex with SHMT2 and the other subunits of the BRISC complex.

The protein resides in the cytoplasm. The protein localises to the nucleus. In terms of biological role, component of the BRCA1-A complex, a complex that specifically recognizes 'Lys-63'-linked ubiquitinated histones H2A and H2AX at DNA lesions sites, leading to target the BRCA1-BARD1 heterodimer to sites of DNA damage at double-strand breaks (DSBs). The BRCA1-A complex also possesses deubiquitinase activity that specifically removes 'Lys-63'-linked ubiquitin on histones H2A and H2AX. In the BRCA1-A complex, it is required for the complex integrity and its localization at DSBs. Component of the BRISC complex, a multiprotein complex that specifically cleaves 'Lys-63'-linked ubiquitin in various substrates. In these 2 complexes, it is probably required to maintain the stability of BABAM2 and help the 'Lys-63'-linked deubiquitinase activity mediated by BRCC3/BRCC36 component. The BRISC complex is required for normal mitotic spindle assembly and microtubule attachment to kinetochores via its role in deubiquitinating NUMA1. Plays a role in interferon signaling via its role in the deubiquitination of the interferon receptor IFNAR1; deubiquitination increases IFNAR1 activity by enhancing its stability and cell surface expression. Down-regulates the response to bacterial lipopolysaccharide (LPS) via its role in IFNAR1 deubiquitination. The chain is BRISC and BRCA1-A complex member 1 (Babam1) from Rattus norvegicus (Rat).